The primary structure comprises 103 residues: Histone H4 (103 aa).

The span at 1-14 (MTGRGKGGKGLGKG) shows a compositional bias: gly residues. Residues 1 to 20 (MTGRGKGGKGLGKGGAKRHR) form a disordered region. N6-acetyl-N6-methyllysine; alternate is present on residues K6 and K13. Residues 17 to 21 (KRHRK) mediate DNA binding.

The protein belongs to the histone H4 family. In terms of assembly, the nucleosome is a histone octamer containing two molecules each of H2A, H2B, H3 and H4 assembled in one H3-H4 heterotetramer and two H2A-H2B heterodimers. The octamer wraps approximately 147 bp of DNA.

It is found in the nucleus. The protein resides in the chromosome. In terms of biological role, core component of nucleosome. Nucleosomes wrap and compact DNA into chromatin, limiting DNA accessibility to the cellular machineries which require DNA as a template. Histones thereby play a central role in transcription regulation, DNA repair, DNA replication and chromosomal stability. DNA accessibility is regulated via a complex set of post-translational modifications of histones, also called histone code, and nucleosome remodeling. The sequence is that of Histone H4 (His4) from Myrmica ruginodis (Red ant).